The sequence spans 188 residues: SAYSvFN domain-containing protein 1 (188 aa).

The span at 1 to 10 (MEQRLAEFRE) shows a compositional bias: basic and acidic residues. 2 disordered regions span residues 1-43 (MEQR…ATPK) and 60-80 (AIAQ…PEST). Residues 1–100 (MEQRLAEFRE…SFLTNITFLK (100 aa)) lie on the Cytoplasmic side of the membrane. 2 stretches are compositionally biased toward low complexity: residues 22 to 43 (STSS…ATPK) and 60 to 75 (AIAQ…AGQQ). The middle helical (MH) stretch occupies residues 86 to 100 (SSCRQSFLTNITFLK). An intramembrane region (helical) is located at residues 101 to 121 (VLLWLVLLGLFVELEFGLAYF). Over 122–188 (VLSMFYWMYV…RTSPSCSSYP (67 aa)) the chain is Cytoplasmic.

This sequence belongs to the SAYSD1 family. In terms of assembly, associates (via N-terminus) with ribosomes. As to expression, enriched in testis; predominantly expressed in round and elongating spermatids.

Its subcellular location is the endoplasmic reticulum membrane. It is found in the cytoplasmic vesicle membrane. Ufmylation 'reader' component of a translocation-associated quality control pathway, a mechanism that takes place when a ribosome has stalled during translation, and which is required to degrade clogged substrates. Specifically recognizes and binds ufmylated ribosomes when a ribosome has stalled, promoting the transport of stalled nascent chain via the TRAPP complex to lysosomes for degradation. The polypeptide is SAYSvFN domain-containing protein 1 (Mus musculus (Mouse)).